The chain runs to 585 residues: Glutamine--tRNA ligase (585 aa).

The short motif at 51–61 is the 'HIGH' region element; it reads PEPNGYLHIGH. ATP-binding positions include 52–54 and 58–64; these read EPN and HIGHAKS. L-glutamine-binding residues include Asp-84 and Tyr-238. Residues Thr-257 and 292–293 contribute to the ATP site; that span reads RL. Residues 299–303 carry the 'KMSKS' region motif; that stretch reads ITSKR.

The protein belongs to the class-I aminoacyl-tRNA synthetase family. In terms of assembly, monomer.

It is found in the cytoplasm. It catalyses the reaction tRNA(Gln) + L-glutamine + ATP = L-glutaminyl-tRNA(Gln) + AMP + diphosphate. The protein is Glutamine--tRNA ligase of Cupriavidus necator (strain ATCC 17699 / DSM 428 / KCTC 22496 / NCIMB 10442 / H16 / Stanier 337) (Ralstonia eutropha).